A 21-amino-acid chain; its full sequence is Ferredoxin (21 aa).

Residues 2–21 (KVKVDADACIGCGVCVELCP) enclose the 4Fe-4S ferredoxin-type domain. [4Fe-4S] cluster is bound by residues Cys-10, Cys-13, and Cys-16.

As to quaternary structure, monomer. [4Fe-4S] cluster serves as cofactor.

In terms of biological role, ferredoxins are iron-sulfur proteins that transfer electrons in a wide variety of metabolic reactions. The sequence is that of Ferredoxin (fdxA) from Pyrococcus woesei.